A 353-amino-acid polypeptide reads, in one-letter code: tRNA N6-adenosine threonylcarbamoyltransferase (353 aa).

Positions 109 and 113 each coordinate Fe cation. Substrate contacts are provided by residues 136 to 140 (TVSGG), Asp-169, Gly-182, Asp-186, and Asn-284. Asp-312 serves as a coordination point for Fe cation.

Belongs to the KAE1 / TsaD family. It depends on Fe(2+) as a cofactor.

The protein localises to the cytoplasm. It carries out the reaction L-threonylcarbamoyladenylate + adenosine(37) in tRNA = N(6)-L-threonylcarbamoyladenosine(37) in tRNA + AMP + H(+). Required for the formation of a threonylcarbamoyl group on adenosine at position 37 (t(6)A37) in tRNAs that read codons beginning with adenine. Is involved in the transfer of the threonylcarbamoyl moiety of threonylcarbamoyl-AMP (TC-AMP) to the N6 group of A37, together with TsaE and TsaB. TsaD likely plays a direct catalytic role in this reaction. This is tRNA N6-adenosine threonylcarbamoyltransferase from Chlorobium phaeobacteroides (strain DSM 266 / SMG 266 / 2430).